Here is a 445-residue protein sequence, read N- to C-terminus: Chromosome partition protein MukF (445 aa).

Residues 213-241 form a leucine-zipper region; the sequence is LSETSSTLRELQDTLQAASDELQTQILDI.

This sequence belongs to the MukF family. Interacts, and probably forms a ternary complex, with MukE and MukB via its C-terminal region. The complex formation is stimulated by calcium or magnesium. It is required for an interaction between MukE and MukB.

Its subcellular location is the cytoplasm. The protein resides in the nucleoid. Functionally, involved in chromosome condensation, segregation and cell cycle progression. May participate in facilitating chromosome segregation by condensation DNA from both sides of a centrally located replisome during cell division. Not required for mini-F plasmid partitioning. Probably acts via its interaction with MukB and MukE. Overexpression results in anucleate cells. It has a calcium binding activity. The sequence is that of Chromosome partition protein MukF from Vibrio campbellii (strain ATCC BAA-1116).